Here is a 258-residue protein sequence, read N- to C-terminus: Large ribosomal subunit protein bL21 (258 aa).

Basic and acidic residues predominate over residues K140–K159. The tract at residues K140–A181 is disordered.

Belongs to the bacterial ribosomal protein bL21 family. In terms of assembly, part of the 50S ribosomal subunit. Contacts protein L20.

This protein binds to 23S rRNA in the presence of protein L20. In Jannaschia sp. (strain CCS1), this protein is Large ribosomal subunit protein bL21.